The following is a 394-amino-acid chain: Saposin-like protein 11 (394 aa).

Residues 1–18 (MSVFRFLLFLSLLVGSNA) form the signal peptide. Residues asparagine 25 and asparagine 272 are each glycosylated (N-linked (GlcNAc...) asparagine). One can recognise a Saposin B-type domain in the interval 306–394 (GNMVCDICEK…SFCKHVPFCK (89 aa)). 3 cysteine pairs are disulfide-bonded: cysteine 310-cysteine 393, cysteine 313-cysteine 387, and cysteine 343-cysteine 359.

In Caenorhabditis elegans, this protein is Saposin-like protein 11 (spp-11).